Here is a 268-residue protein sequence, read N- to C-terminus: Small ribosomal subunit protein uS2 (268 aa).

Belongs to the universal ribosomal protein uS2 family.

The chain is Small ribosomal subunit protein uS2 from Caulobacter vibrioides (strain ATCC 19089 / CIP 103742 / CB 15) (Caulobacter crescentus).